Here is a 357-residue protein sequence, read N- to C-terminus: Peptide chain release factor 1 (357 aa).

Gln236 is modified (N5-methylglutamine).

It belongs to the prokaryotic/mitochondrial release factor family. Methylated by PrmC. Methylation increases the termination efficiency of RF1.

The protein resides in the cytoplasm. Functionally, peptide chain release factor 1 directs the termination of translation in response to the peptide chain termination codons UAG and UAA. This Mycolicibacterium vanbaalenii (strain DSM 7251 / JCM 13017 / BCRC 16820 / KCTC 9966 / NRRL B-24157 / PYR-1) (Mycobacterium vanbaalenii) protein is Peptide chain release factor 1.